A 207-amino-acid chain; its full sequence is MRAAVFVCLLLGWVGVATPRRLRGPQADRLAITLYYEALCPYCMEFVTTQLNPSMVRQDRLPFTDLTLVPYGNARTNDDGNVECQHGVMECELNAWHACILEHHDIAQSLKLIACMMRGKKNRLEKCADHYQIDVGDVKNCKKTRQVNDILRKYGKETAKVSFQGVPAVALDNVYNADLSANLTDHFDAIFCAKYKEKFNKQLNNCQ.

Residues 1-19 form the signal peptide; that stretch reads MRAAVFVCLLLGWVGVATP. Cys-40 and Cys-43 form a disulfide bridge. N-linked (GlcNAc...) asparagine glycosylation occurs at Asn-182.

It belongs to the GILT family.

The protein resides in the secreted. Functionally, probable lysosomal thiol reductase that can reduce protein disulfide bonds. Involved in the immune response to bacterial infection. In Drosophila melanogaster (Fruit fly), this protein is GILT-like protein 2.